A 1161-amino-acid chain; its full sequence is Nuclear pore complex-interacting protein family member B11 (1161 aa).

Residues 63–87 traverse the membrane as a helical segment; that stretch reads IIIAFPTSYKVVITLWIVYLWVSLL. Disordered stretches follow at residues 278–580 and 892–1161; these read ADDN…DDNI and SADD…RRLS. Positions 311 to 321 are enriched in pro residues; that stretch reads PLPPSAPPSAP. Basic and acidic residues-rich tracts occupy residues 368–378, 410–420, 452–462, 494–504, 536–546, 918–928, 960–970, 1002–1012, and 1044–1054; these read DNIKTTAERLR, DNIKTPAEHLR, DNIKTPAERLR, and DNIKTTAEHLR.

Belongs to the NPIP family.

The protein localises to the membrane. The chain is Nuclear pore complex-interacting protein family member B11 (NPIPB11) from Homo sapiens (Human).